Reading from the N-terminus, the 114-residue chain is uncharacterized protein (114 aa).

Residues 31-72 (EFEKLVSEQMKTMDKLLDLQSELDRCKQIEAELRHLERDARL) are a coiled coil.

This is an uncharacterized protein from Bacillus subtilis (strain 168).